The primary structure comprises 483 residues: Peroxisomal biogenesis factor 3 (483 aa).

The Peroxisomal portion of the chain corresponds to Met-1–Lys-14. Residues Phe-15–Phe-35 form a helical membrane-spanning segment. At Ser-36–Leu-483 the chain is on the cytoplasmic side. Disordered stretches follow at residues Gly-119–Thr-149 and Asn-230–Ile-253. Positions Ser-242 to Ile-253 are enriched in polar residues.

Belongs to the peroxin-3 family.

The protein localises to the peroxisome membrane. Its function is as follows. Involved in peroxisome biosynthesis. This chain is Peroxisomal biogenesis factor 3 (PEX3), found in Kluyveromyces lactis (strain ATCC 8585 / CBS 2359 / DSM 70799 / NBRC 1267 / NRRL Y-1140 / WM37) (Yeast).